Here is a 219-residue protein sequence, read N- to C-terminus: Transmembrane protein 125 (219 aa).

4 consecutive transmembrane segments (helical) span residues 36 to 56 (LCFA…VALL), 68 to 88 (LAVG…QLMS), 114 to 134 (ALVV…LAGL), and 147 to 167 (MLSV…GLLL).

The protein localises to the membrane. This is Transmembrane protein 125 (TMEM125) from Bos taurus (Bovine).